The chain runs to 357 residues: MRLGTFHKKKRFYINKIKINFLSFLFRNKINNQITDPAQVKSCLIIHDNNKLGDLIVLSSIYRELYSKGVKITLLTNRKGGEFLSNNKNIFEFCIKESTGFLEMLTLCKHLRDLQFDIVLDPFETMPSFKHSLILSSLKDSYILGFDHWYKRYYSFYHPHDECLKEHMSTRAIEILKHIYGEGKFSTNYDLHLPVDVEDKIKEFIGDTRIVIINPLGAKKICRLTFEQIKVIYQEVKTHFENYRIIFTGLPQDLLTIPILEIETLPFDEFIYTVALTKYSDFVISVDTALVHIAAAYHKPTLAFYPNSRTPEYPSHLIWSPNHHKSIQIVSPTYTVKDIDTETLTNSVKRLSCIDKK.

The enzyme catalyses alpha-D-Glc-(1-&gt;2)-alpha-D-Glc-(1-&gt;3)-[alpha-D-Gal-(1-&gt;6)]-alpha-D-Glc-(1-&gt;3)-[L-alpha-D-Hep-(1-&gt;7)]-4-O-PO3(2-)-L-alpha-D-Hep-(1-&gt;3)-4-O-PO3(2-)-L-alpha-D-Hep-(1-&gt;5)-[alpha-Kdo-(2-&gt;4)]-alpha-Kdo-(2-&gt;6)-lipid A + ADP-L-glycero-beta-D-manno-heptose = lipid A-core + ADP + H(+). Its pathway is bacterial outer membrane biogenesis; LPS core biosynthesis. In terms of biological role, transferase involved in the biosynthesis of the core oligosaccharide region of lipopolysaccharide (LPS). May catalyze the addition of the terminal heptose (heptose IV) to the outer-core glucose III, the last step of the lipid A-core oligosaccharide biosynthesis. The chain is Putative lipopolysaccharide heptosyltransferase 4 from Escherichia coli (strain K12).